The following is a 1133-amino-acid chain: Roquin-1 (1133 aa).

Zn(2+)-binding residues include Cys-14, Cys-17, Cys-33, His-35, Cys-38, Cys-50, and Asp-53. The segment at 14–54 (CPICTQTFDETIRKPISLGCGHTVCKMCLNKLHRKACPFDQ) adopts an RING-type; degenerate zinc-finger fold. The tract at residues 89–173 (GVEDTKHYEE…RTVTELILQH (85 aa)) is HEPN-N. The tract at residues 174-326 (QNPQQLSSNL…MQSIIDKLQT (153 aa)) is ROQ. Residues 327–396 (PASFAQSVQE…VVHGLVDYIQ (70 aa)) are HEPN-C. A C3H1-type zinc finger spans residues 413 to 441 (KYKTYMCRDMKQRGGCPRGASCTFAHSQE). Ser-462, Ser-531, Ser-535, and Ser-863 each carry phosphoserine. Residues 505–542 (TQLIPRGTDPSYDSSLKPGKIDHLSSSAPGSPPDLLES) are disordered. Disordered stretches follow at residues 1000–1019 (NTLA…WPGM), 1058–1078 (NTSK…PAED), and 1094–1133 (QENI…SSAP). Residues 1007–1016 (QPPPPPPPKW) are compositionally biased toward pro residues. Positions 1058–1070 (NTSKQAENGQPEP) are enriched in polar residues. Over residues 1096 to 1110 (NISLLSNKTSSLNLS) the composition is skewed to low complexity. Ser-1110 bears the Phosphoserine mark. Positions 1119 to 1133 (NNDSQRSGVTPSSAP) are enriched in polar residues.

Able to homodimerize. Interacts with DDX6 and EDC4. Interacts with CCR4-NOT deadenylase complex. Interacts with RC3H1; the interaction is RNA independent. Proteolytically cleaved after Arg-510 and Arg-579 by MALT1 in activated CD4(+) T cells; cleavage at Arg-510 and Arg-579 is critical for promoting RC3H1 degradation in response to T-cell receptor (TCR) stimulation, and hence is necessary for prolonging the stability of a set of mRNAs controlling Th17 cell differentiation. As to expression, widely expressed. Expressed at higher level in cerebellum, spleen, ovary and liver.

Its subcellular location is the cytoplasm. The protein resides in the P-body. The protein localises to the cytoplasmic granule. It catalyses the reaction S-ubiquitinyl-[E2 ubiquitin-conjugating enzyme]-L-cysteine + [acceptor protein]-L-lysine = [E2 ubiquitin-conjugating enzyme]-L-cysteine + N(6)-ubiquitinyl-[acceptor protein]-L-lysine.. Its pathway is protein modification; protein ubiquitination. Functionally, post-transcriptional repressor of mRNAs containing a conserved stem loop motif, called constitutive decay element (CDE), which is often located in the 3'-UTR, as in HMGXB3, ICOS, IER3, NFKBID, NFKBIZ, PPP1R10, TNF, TNFRSF4 and in many more mRNAs. Cleaves translationally inactive mRNAs harboring a stem-loop (SL), often located in their 3'-UTRs, during the early phase of inflammation in a helicase UPF1-independent manner. Binds to CDE and promotes mRNA deadenylation and degradation. This process does not involve miRNAs. In follicular helper T (Tfh) cells, represses of ICOS and TNFRSF4 expression, thus preventing spontaneous Tfh cell differentiation, germinal center B-cell differentiation in the absence of immunization and autoimmunity. In resting or LPS-stimulated macrophages, controls inflammation by suppressing TNF expression. Also recognizes CDE in its own mRNA and in that of paralogous RC3H2, possibly leading to feedback loop regulation. Recognizes and binds mRNAs containing a hexaloop stem-loop motif, called alternative decay element (ADE). Together with ZC3H12A, destabilizes TNFRSF4/OX40 mRNA by binding to the conserved stem loop structure in its 3'UTR. Able to interact with double-stranded RNA (dsRNA). miRNA-binding protein that regulates microRNA homeostasis. Enhances DICER-mediated processing of pre-MIR146a but reduces mature MIR146a levels through an increase of 3' end uridylation. Both inhibits ICOS mRNA expression and they may act together to exert the suppression. Acts as a ubiquitin E3 ligase. Pairs with E2 enzymes UBE2A, UBE2B, UBE2D2, UBE2F, UBE2G1, UBE2G2 and UBE2L3 and produces polyubiquitin chains. Shows the strongest activity when paired with UBE2N:UBE2V1 or UBE2N:UBE2V2 E2 complexes and generate both short and long polyubiquitin chains. The chain is Roquin-1 from Homo sapiens (Human).